Here is a 209-residue protein sequence, read N- to C-terminus: Protease (209 aa).

Residues His-60, Asp-77, and Cys-127 contribute to the active site.

The protein belongs to the peptidase C5 family. As to quaternary structure, interacts with protease cofactor pVI-C; this interaction is necessary for protease activation.

It localises to the virion. It is found in the host nucleus. The catalysed reaction is Cleaves proteins of the adenovirus and its host cell at two consensus sites: -Yaa-Xaa-Gly-Gly-|-Xaa- and -Yaa-Xaa-Gly-Xaa-|-Gly- (in which Yaa is Met, Ile or Leu, and Xaa is any amino acid).. Requires DNA and protease cofactor for maximal activation. Inside nascent virions, becomes partially activated by binding to the viral DNA, allowing it to cleave the cofactor that binds to the protease and fully activates it. Actin, like the viral protease cofactor, seems to act as a cofactor in the cleavage of cytokeratin 18 and of actin itself. In terms of biological role, cleaves viral precursor proteins (pTP, pIIIa, pVI, pVII, pVIII, and pX) inside newly assembled particles giving rise to mature virions. Protease complexed to its cofactor slides along the viral DNA to specifically locate and cleave the viral precursors. Mature virions have a weakened organization compared to the unmature virions, thereby facilitating subsequent uncoating. Without maturation, the particle lacks infectivity and is unable to uncoat. Late in adenovirus infection, in the cytoplasm, may participate in the cytoskeleton destruction. Cleaves host cell cytoskeletal keratins K7 and K18. The protein is Protease of Homo sapiens (Human).